A 188-amino-acid polypeptide reads, in one-letter code: Probable nicotinate-nucleotide adenylyltransferase (188 aa).

The protein belongs to the NadD family.

It catalyses the reaction nicotinate beta-D-ribonucleotide + ATP + H(+) = deamido-NAD(+) + diphosphate. The protein operates within cofactor biosynthesis; NAD(+) biosynthesis; deamido-NAD(+) from nicotinate D-ribonucleotide: step 1/1. In terms of biological role, catalyzes the reversible adenylation of nicotinate mononucleotide (NaMN) to nicotinic acid adenine dinucleotide (NaAD). The polypeptide is Probable nicotinate-nucleotide adenylyltransferase (Acholeplasma laidlawii (strain PG-8A)).